The chain runs to 795 residues: Phenylalanine--tRNA ligase beta subunit (795 aa).

Positions 39–148 (AGSFHGVVVG…ADAPIGTDIR (110 aa)) constitute a tRNA-binding domain. The region spanning 401-476 (PKRATITLRR…RVYGYNNIPD (76 aa)) is the B5 domain. The Mg(2+) site is built by aspartate 454, aspartate 460, glutamate 463, and glutamate 464. The FDX-ACB domain occupies 701 to 794 (SRFPANRRDI…LKERFQASLR (94 aa)).

Belongs to the phenylalanyl-tRNA synthetase beta subunit family. Type 1 subfamily. Tetramer of two alpha and two beta subunits. Mg(2+) is required as a cofactor.

The protein localises to the cytoplasm. The enzyme catalyses tRNA(Phe) + L-phenylalanine + ATP = L-phenylalanyl-tRNA(Phe) + AMP + diphosphate + H(+). The sequence is that of Phenylalanine--tRNA ligase beta subunit from Shigella dysenteriae serotype 1 (strain Sd197).